A 188-amino-acid chain; its full sequence is Elongation factor P (188 aa).

The protein belongs to the elongation factor P family.

The protein localises to the cytoplasm. It participates in protein biosynthesis; polypeptide chain elongation. Functionally, involved in peptide bond synthesis. Stimulates efficient translation and peptide-bond synthesis on native or reconstituted 70S ribosomes in vitro. Probably functions indirectly by altering the affinity of the ribosome for aminoacyl-tRNA, thus increasing their reactivity as acceptors for peptidyl transferase. In Rhodopseudomonas palustris (strain TIE-1), this protein is Elongation factor P.